A 181-amino-acid chain; its full sequence is Ribosome maturation factor RimM (181 aa).

The PRC barrel domain occupies 99 to 172; sequence EDEFYQVDLI…FLIVDPMAAG (74 aa).

Belongs to the RimM family. Binds ribosomal protein uS19.

Its subcellular location is the cytoplasm. In terms of biological role, an accessory protein needed during the final step in the assembly of 30S ribosomal subunit, possibly for assembly of the head region. Essential for efficient processing of 16S rRNA. May be needed both before and after RbfA during the maturation of 16S rRNA. It has affinity for free ribosomal 30S subunits but not for 70S ribosomes. This is Ribosome maturation factor RimM from Bartonella tribocorum (strain CIP 105476 / IBS 506).